We begin with the raw amino-acid sequence, 668 residues long: tRNA 5-methylaminomethyl-2-thiouridine biosynthesis bifunctional protein MnmC (668 aa).

The segment at 1–245 (MKHYSIQPAN…KREMLCGVME (245 aa)) is tRNA (mnm(5)s(2)U34)-methyltransferase. The tract at residues 270–668 (IGGGIASALL…LLKGKAVKAG (399 aa)) is FAD-dependent cmnm(5)s(2)U34 oxidoreductase.

It in the N-terminal section; belongs to the methyltransferase superfamily. tRNA (mnm(5)s(2)U34)-methyltransferase family. The protein in the C-terminal section; belongs to the DAO family. FAD serves as cofactor.

It localises to the cytoplasm. The enzyme catalyses 5-aminomethyl-2-thiouridine(34) in tRNA + S-adenosyl-L-methionine = 5-methylaminomethyl-2-thiouridine(34) in tRNA + S-adenosyl-L-homocysteine + H(+). In terms of biological role, catalyzes the last two steps in the biosynthesis of 5-methylaminomethyl-2-thiouridine (mnm(5)s(2)U) at the wobble position (U34) in tRNA. Catalyzes the FAD-dependent demodification of cmnm(5)s(2)U34 to nm(5)s(2)U34, followed by the transfer of a methyl group from S-adenosyl-L-methionine to nm(5)s(2)U34, to form mnm(5)s(2)U34. The protein is tRNA 5-methylaminomethyl-2-thiouridine biosynthesis bifunctional protein MnmC of Escherichia coli O9:H4 (strain HS).